Consider the following 243-residue polypeptide: Cytochrome c oxidase subunit 2 (243 aa).

The Mitochondrial intermembrane segment spans residues 1–34 (MNNIIHNDAPTPWGIYFQDGASPVYDGIVELHDQ). The chain crosses the membrane as a helical span at residues 35–55 (VLFYLLIVLVGVSWILFSTIL). The Mitochondrial matrix portion of the chain corresponds to 56-74 (RFRGSGIVHKYHNHSTTIE). The chain crosses the membrane as a helical span at residues 75-97 (FVWTVSPALLLIAIAFPSFKLLY). At 98–243 (LMDEVIDPSI…EKFLSWLDNQ (146 aa)) the chain is on the mitochondrial intermembrane side. 6 residues coordinate Cu cation: His178, Cys213, Glu215, Cys217, His221, and Met224. Glu215 is a binding site for Mg(2+).

This sequence belongs to the cytochrome c oxidase subunit 2 family. Component of the cytochrome c oxidase (complex IV, CIV), a multisubunit enzyme composed of a catalytic core of 3 subunits and several supernumerary subunits. The complex exists as a monomer or a dimer and forms supercomplexes (SCs) in the inner mitochondrial membrane with ubiquinol-cytochrome c oxidoreductase (cytochrome b-c1 complex, complex III, CIII). The cofactor is Cu cation.

It is found in the mitochondrion inner membrane. The catalysed reaction is 4 Fe(II)-[cytochrome c] + O2 + 8 H(+)(in) = 4 Fe(III)-[cytochrome c] + 2 H2O + 4 H(+)(out). Component of the cytochrome c oxidase, the last enzyme in the mitochondrial electron transport chain which drives oxidative phosphorylation. The respiratory chain contains 3 multisubunit complexes succinate dehydrogenase (complex II, CII), ubiquinol-cytochrome c oxidoreductase (cytochrome b-c1 complex, complex III, CIII) and cytochrome c oxidase (complex IV, CIV), that cooperate to transfer electrons derived from NADH and succinate to molecular oxygen, creating an electrochemical gradient over the inner membrane that drives transmembrane transport and the ATP synthase. Cytochrome c oxidase is the component of the respiratory chain that catalyzes the reduction of oxygen to water. Electrons originating from reduced cytochrome c in the intermembrane space (IMS) are transferred via the dinuclear copper A center (CU(A)) of subunit 2 and heme A of subunit 1 to the active site in subunit 1, a binuclear center (BNC) formed by heme A3 and copper B (CU(B)). The BNC reduces molecular oxygen to 2 water molecules using 4 electrons from cytochrome c in the IMS and 4 protons from the mitochondrial matrix. This chain is Cytochrome c oxidase subunit 2, found in Pneumocystis carinii.